Reading from the N-terminus, the 400-residue chain is Imidazolonepropionase (400 aa).

Residues H68 and H70 each coordinate Fe(3+). Zn(2+)-binding residues include H68 and H70. The 4-imidazolone-5-propanoate site is built by R77, Y140, and H173. Y140 contacts N-formimidoyl-L-glutamate. Fe(3+) is bound at residue H238. Position 238 (H238) interacts with Zn(2+). Q241 serves as a coordination point for 4-imidazolone-5-propanoate. D313 is a Fe(3+) binding site. Residue D313 participates in Zn(2+) binding. N-formimidoyl-L-glutamate is bound by residues N315 and G317. T318 contributes to the 4-imidazolone-5-propanoate binding site.

This sequence belongs to the metallo-dependent hydrolases superfamily. HutI family. It depends on Zn(2+) as a cofactor. The cofactor is Fe(3+).

The protein localises to the cytoplasm. It catalyses the reaction 4-imidazolone-5-propanoate + H2O = N-formimidoyl-L-glutamate. It participates in amino-acid degradation; L-histidine degradation into L-glutamate; N-formimidoyl-L-glutamate from L-histidine: step 3/3. In terms of biological role, catalyzes the hydrolytic cleavage of the carbon-nitrogen bond in imidazolone-5-propanoate to yield N-formimidoyl-L-glutamate. It is the third step in the universal histidine degradation pathway. This Paracoccus denitrificans (strain Pd 1222) protein is Imidazolonepropionase.